The following is a 150-amino-acid chain: Transcriptional repressor NrdR (150 aa).

Residues 3-34 (CPFCNASDTKVVDTRASEDDKIVRRRRECISC) fold into a zinc finger. Residues 49-139 (LTVVKKDKNR…VYREFTDVKS (91 aa)) form the ATP-cone domain.

Belongs to the NrdR family. Zn(2+) serves as cofactor.

Functionally, negatively regulates transcription of bacterial ribonucleotide reductase nrd genes and operons by binding to NrdR-boxes. The polypeptide is Transcriptional repressor NrdR (Finegoldia magna (strain ATCC 29328 / DSM 20472 / WAL 2508) (Peptostreptococcus magnus)).